Reading from the N-terminus, the 314-residue chain is Ferric-anguibactin transport system permease protein FatD (314 aa).

Helical transmembrane passes span 1 to 21 (MTFR…FFGA), 49 to 69 (VALI…QHIV), 76 to 96 (PGTT…IVML), 103 to 123 (ERMF…IAII), 132 to 152 (ALVP…AEFY), 180 to 200 (IIFL…RFTV), 207 to 226 (IASN…LILV), 230 to 252 (VAVT…NLVA), 265 to 285 (IVAL…RVVL), and 288 to 308 (FEVP…LAFL).

Belongs to the binding-protein-dependent transport system permease family. FecCD subfamily. As to quaternary structure, part of an iron transport system composed of the outer membrane receptor FatA, the periplasmic binding protein FatB and the inner membrane proteins FatC and FatD.

It is found in the cell inner membrane. Functionally, involved in the uptake of iron in complex with the siderophore anguibactin. Responsible for the translocation of ferric-anguibactin across the cytoplasmic membrane. The protein is Ferric-anguibactin transport system permease protein FatD of Vibrio anguillarum (strain ATCC 68554 / 775) (Listonella anguillarum).